We begin with the raw amino-acid sequence, 504 residues long: Pre-mRNA-processing factor 19 (504 aa).

Ser2 carries the N-acetylserine modification. The U-box domain maps to Ser2–Ala73. The interval Ala68–Gly223 is may mediate interaction with PSMC5. Residues Lys122, Lys179, Lys244, and Lys261 each carry the N6-acetyllysine modification. One copy of the WD 1 repeat lies at Ala219 to Thr259. WD repeat units lie at residues Gly262–Val301, Ala304–Thr345, Thr348–Asn387, Gly390–Thr429, Asp433–Thr472, and Glu473–Ser503.

It belongs to the WD repeat PRP19 family. As to quaternary structure, homotetramer. Component of activated, catalytic and post-catalytic spliceosomes. Component of the Prp19 complex/PRP19C/Nineteen complex/NTC and related complexes described as PRP19-CDC5L splicing complex and PSO4 complex. A homotetramer of PRPF19, CDC5L, PLRG1 and BCAS2 constitute the core of those complexes. The interaction with CDC5L, PLRG1 and BCAS2 is direct within this core complex. At least three less stably associated proteins CTNNBL1, CWC15 and HSPA8 are found in the Prp19 complex. The Prp19 complex associates with the spliceosome during its assembly and remodeling recruiting additional proteins. Component of the XAB2 complex, a multimeric protein complex composed of XAB2, PRPF19, AQR, ZNF830, ISY1, and PPIE. Interacts with CWC22 and EIF4A3 in an RNA-independent manner. Interacts with RPA1 and RPA2; the PRP19-CDC5L complex is recruited to the sites of DNA repair where it interacts with the replication protein A complex (RPA). Interacts with SETMAR; required for SETMAR recruitment to site of DNA damage. Interacts with U2AF2; the interaction is direct and recruits the Prp19 complex to RNA polymerase II C-terminal domain (CTD) and the pre-mRNA. Interacts with PRPF3. Interacts with APEX1, DNTT and PSMB4. Interacts with PSMC5. Interacts with KNSTRN. Interacts (via N-terminus) with CDC5L. Interacts with KHDC4. Interacts with USB1. Interacts with DDX41.

The protein localises to the nucleus. Its subcellular location is the nucleoplasm. The protein resides in the cytoplasm. It is found in the cytoskeleton. It localises to the spindle. The protein localises to the lipid droplet. It carries out the reaction S-ubiquitinyl-[E2 ubiquitin-conjugating enzyme]-L-cysteine + [acceptor protein]-L-lysine = [E2 ubiquitin-conjugating enzyme]-L-cysteine + N(6)-ubiquitinyl-[acceptor protein]-L-lysine.. It functions in the pathway protein modification; protein ubiquitination. Ubiquitin-protein ligase which is a core component of several complexes mainly involved pre-mRNA splicing and DNA repair. Required for pre-mRNA splicing as component of the spliceosome. Core component of the PRP19C/Prp19 complex/NTC/Nineteen complex which is part of the spliceosome and participates in its assembly, its remodeling and is required for its activity. During assembly of the spliceosome, mediates 'Lys-63'-linked polyubiquitination of the U4 spliceosomal protein PRPF3. Ubiquitination of PRPF3 allows its recognition by the U5 component PRPF8 and stabilizes the U4/U5/U6 tri-snRNP spliceosomal complex. Recruited to RNA polymerase II C-terminal domain (CTD) and the pre-mRNA, it may also couple the transcriptional and spliceosomal machineries. The XAB2 complex, which contains PRPF19, is also involved in pre-mRNA splicing, transcription and transcription-coupled repair. Beside its role in pre-mRNA splicing PRPF19, as part of the PRP19-CDC5L complex, plays a role in the DNA damage response/DDR. It is recruited to the sites of DNA damage by the RPA complex where PRPF19 directly ubiquitinates RPA1 and RPA2. 'Lys-63'-linked polyubiquitination of the RPA complex allows the recruitment of the ATR-ATRIP complex and the activation of ATR, a master regulator of the DNA damage response. May also play a role in DNA double-strand break (DSB) repair by recruiting the repair factor SETMAR to altered DNA. As part of the PSO4 complex may also be involved in the DNA interstrand cross-links/ICLs repair process. In addition, may also mediate 'Lys-48'-linked polyubiquitination of substrates and play a role in proteasomal degradation. May play a role in the biogenesis of lipid droplets. May play a role in neural differentiation possibly through its function as part of the spliceosome. This is Pre-mRNA-processing factor 19 (PRPF19) from Bos taurus (Bovine).